Reading from the N-terminus, the 403-residue chain is Argininosuccinate synthase (403 aa).

ATP is bound by residues Ala12–Ser20 and Ala39. Position 91 (Tyr91) interacts with L-citrulline. Gly121 provides a ligand contact to ATP. Residues Thr123, Asn127, and Asp128 each coordinate L-aspartate. Asn127 contributes to the L-citrulline binding site. Residues Arg131, Ser180, Ser189, Glu265, and Tyr277 each contribute to the L-citrulline site.

It belongs to the argininosuccinate synthase family. Type 1 subfamily. Homotetramer.

The protein localises to the cytoplasm. It catalyses the reaction L-citrulline + L-aspartate + ATP = 2-(N(omega)-L-arginino)succinate + AMP + diphosphate + H(+). It functions in the pathway amino-acid biosynthesis; L-arginine biosynthesis; L-arginine from L-ornithine and carbamoyl phosphate: step 2/3. This chain is Argininosuccinate synthase, found in Buchnera aphidicola subsp. Acyrthosiphon pisum (strain 5A).